The chain runs to 164 residues: Histone H1 (164 aa).

Polar residues predominate over residues 1 to 10; the sequence is MAPRSSTSKS. The segment at 1 to 164 is disordered; it reads MAPRSSTSKS…KKSSKPAKKN (164 aa). Positions 16-27 are enriched in basic residues; it reads KDHKKAPIKKAI. Phosphothreonine is present on residues T47 and T54. Composition is skewed to basic and acidic residues over residues 49 to 61, 69 to 89, and 117 to 156; these read VKKD…ADTK, TMKE…GDKK, and TKKE…DAKK.

Post-translationally, cell-growth/division-associated phosphorylation by a CDC2-like kinase.

The protein resides in the nucleus. The protein localises to the chromosome. Its function is as follows. Histones H1 are necessary for the condensation of nucleosome chains into higher-order structures. This chain is Histone H1 (HHO), found in Tetrahymena thermophila (strain SB210).